Here is a 122-residue protein sequence, read N- to C-terminus: Large ribosomal subunit protein uL14 (122 aa).

This sequence belongs to the universal ribosomal protein uL14 family. As to quaternary structure, part of the 50S ribosomal subunit. Forms a cluster with proteins L3 and L19. In the 70S ribosome, L14 and L19 interact and together make contacts with the 16S rRNA in bridges B5 and B8.

Functionally, binds to 23S rRNA. Forms part of two intersubunit bridges in the 70S ribosome. The protein is Large ribosomal subunit protein uL14 of Parvibaculum lavamentivorans (strain DS-1 / DSM 13023 / NCIMB 13966).